The following is a 146-amino-acid chain: MVAATAEFRRVFSAFDRDADGKISAAELRLCMKAALGEDMSAEEAEALVSSADTDDDGLLDEEEFTKLAVQLEMGDEEERCRGLMEAFRMYEMEGEGRITPASLKRMLSKLGSHQGIEECQTMICRFDLDGDGVISFEEFKIMMDA.

4 EF-hand domains span residues A3–E38, M40–G75, E79–H114, and Q115–A146. Residues D16, D18, D20, K22, E27, D53, D55, D57, and E64 each contribute to the Ca(2+) site. The Ca(2+) site is built by D128, D130, D132, and E139.

Potential calcium sensor. This chain is Putative calcium-binding protein CML19 (CML19), found in Oryza sativa subsp. japonica (Rice).